A 375-amino-acid polypeptide reads, in one-letter code: Neuropeptide Y receptor type 4 (375 aa).

Over 1 to 39 (MNTSHFLAPLFPGSLQGKNGTNPLDSPYNFSDGCQDSAE) the chain is Extracellular. N-linked (GlcNAc...) asparagine glycans are attached at residues asparagine 2, asparagine 19, and asparagine 29. Residues 40 to 60 (LLAFIITTYSIETILGVLGNL) form a helical membrane-spanning segment. The Cytoplasmic segment spans residues 61–78 (CLIFVTTRQKEKSNVTNL). Residues 79–99 (LIANLAFSDFLMCLICQPLTV) form a helical membrane-spanning segment. The Extracellular portion of the chain corresponds to 100–116 (TYTIMDYWIFGEVLCKM). A disulfide bond links cysteine 114 and cysteine 201. Residues 117–137 (LTFIQCMSVTVSILSLVLVAL) traverse the membrane as a helical segment. Topologically, residues 138-155 (ERHQLIINPTGWKPSIFQ) are cytoplasmic. Residues 156–176 (AYLGIVVIWFVSCFLSLPFLA) form a helical membrane-spanning segment. Topologically, residues 177–211 (NSTLNDLFHYNHSKVVEFLEDKVVCFVSWSSDHHR) are extracellular. The N-linked (GlcNAc...) asparagine glycan is linked to asparagine 187. The helical transmembrane segment at 212–232 (LIYTTFLLLFQYCIPLAFILV) threads the bilayer. The Cytoplasmic segment spans residues 233-266 (CYIRIYQRLQRQKHVFHAHACSSRAGQMKRINSM). The helical transmembrane segment at 267-287 (LMTMVTAFAVLWLPLHVFNTL) threads the bilayer. The Extracellular portion of the chain corresponds to 288–301 (EDWYQEAIPACHGN). The helical transmembrane segment at 302 to 322 (LIFLMCHLLAMASTCVNPFIY) threads the bilayer. Topologically, residues 323-375 (GFLNINFKKDIKALVLTCHCRSPRGESEHLPLSTVHTDLSKGSMRMGSKSNFI) are cytoplasmic. Cysteine 340 carries S-palmitoyl cysteine lipidation.

The protein belongs to the G-protein coupled receptor 1 family. Heart, detected in small intestine.

Its subcellular location is the cell membrane. Functionally, g protein-coupled receptor for PPY/pancreatic polypeptide/PP that is negatively coupled to cAMP. Has much lower affinity for the NPY/neuropeptide Y and PYY/peptide YY. The polypeptide is Neuropeptide Y receptor type 4 (Npy4r) (Mus musculus (Mouse)).